We begin with the raw amino-acid sequence, 169 residues long: Large ribosomal subunit protein uL18 (169 aa).

It belongs to the universal ribosomal protein uL18 family. As to quaternary structure, part of the 50S ribosomal subunit. Contacts the 5S and 23S rRNAs.

Its function is as follows. This is one of the proteins that bind and probably mediate the attachment of the 5S RNA into the large ribosomal subunit, where it forms part of the central protuberance. This is Large ribosomal subunit protein uL18 from Methanothrix thermoacetophila (strain DSM 6194 / JCM 14653 / NBRC 101360 / PT) (Methanosaeta thermophila).